The chain runs to 22 residues: Defensin D1 (22 aa).

The protein belongs to the DEFL family. Group II subfamily.

Its function is as follows. Antimicrobial peptide. Active against Gram-positive and Gram-negative bacterial pathogens. The chain is Defensin D1 from Spinacia oleracea (Spinach).